We begin with the raw amino-acid sequence, 197 residues long: 3-isopropylmalate dehydratase small subunit (197 aa).

It belongs to the LeuD family. LeuD type 1 subfamily. Heterodimer of LeuC and LeuD.

It catalyses the reaction (2R,3S)-3-isopropylmalate = (2S)-2-isopropylmalate. Its pathway is amino-acid biosynthesis; L-leucine biosynthesis; L-leucine from 3-methyl-2-oxobutanoate: step 2/4. In terms of biological role, catalyzes the isomerization between 2-isopropylmalate and 3-isopropylmalate, via the formation of 2-isopropylmaleate. The protein is 3-isopropylmalate dehydratase small subunit of Mycobacterium sp. (strain KMS).